The chain runs to 158 residues: 2-C-methyl-D-erythritol 2,4-cyclodiphosphate synthase (158 aa).

2 residues coordinate a divalent metal cation: Asp8 and His10. 4-CDP-2-C-methyl-D-erythritol 2-phosphate-binding positions include Asp8–His10 and His34–Ser35. His42 is an a divalent metal cation binding site. 4-CDP-2-C-methyl-D-erythritol 2-phosphate contacts are provided by residues Asp56 to Gly58, Phe61 to Asp65, Ala100 to Ala106, Thr132 to Glu135, Phe139, and Arg142.

It belongs to the IspF family. Homotrimer. Requires a divalent metal cation as cofactor.

It catalyses the reaction 4-CDP-2-C-methyl-D-erythritol 2-phosphate = 2-C-methyl-D-erythritol 2,4-cyclic diphosphate + CMP. The protein operates within isoprenoid biosynthesis; isopentenyl diphosphate biosynthesis via DXP pathway; isopentenyl diphosphate from 1-deoxy-D-xylulose 5-phosphate: step 4/6. Functionally, involved in the biosynthesis of isopentenyl diphosphate (IPP) and dimethylallyl diphosphate (DMAPP), two major building blocks of isoprenoid compounds. Catalyzes the conversion of 4-diphosphocytidyl-2-C-methyl-D-erythritol 2-phosphate (CDP-ME2P) to 2-C-methyl-D-erythritol 2,4-cyclodiphosphate (ME-CPP) with a corresponding release of cytidine 5-monophosphate (CMP). This is 2-C-methyl-D-erythritol 2,4-cyclodiphosphate synthase from Aliivibrio fischeri (strain ATCC 700601 / ES114) (Vibrio fischeri).